An 86-amino-acid polypeptide reads, in one-letter code: Omega-theraphotoxin-Hhn1c (86 aa).

An N-terminal signal peptide occupies residues 1–21 (MKSIVFVALFGLALLAVVCSA). The propeptide occupies 22 to 50 (SEDAHKELLKEVVRAMVVDKTDAVQAEER). Cystine bridges form between C52/C66, C59/C71, and C65/C78.

Belongs to the neurotoxin 10 (Hwtx-1) family. 17 (Hntx-9) subfamily. Expressed by the venom gland.

Its subcellular location is the secreted. Functionally, ion channel inhibitor. In Cyriopagopus hainanus (Chinese bird spider), this protein is Omega-theraphotoxin-Hhn1c.